Here is a 391-residue protein sequence, read N- to C-terminus: Putative neutrophil cytosol factor 1B (391 aa).

One can recognise a PX domain in the interval 1-126 (MGDTFIRHIA…DFFKVRPDDL (126 aa)). SH3 domains lie at 157–216 (IILQ…PLDS) and 227–286 (YAGE…KSGQ). A disordered region spans residues 286–391 (QDVSQAQRQI…STKRKLASAV (106 aa)). Residues S304 and S305 each carry the phosphoserine modification. Positions 310-319 (HSIHQRSRKR) are enriched in basic residues. Residues S321, S329, S346, and S349 each carry the phosphoserine modification.

It localises to the cytoplasm. May be required for activation of the latent NADPH oxidase (necessary for superoxide production). This is Putative neutrophil cytosol factor 1B (NCF1B) from Homo sapiens (Human).